Reading from the N-terminus, the 156-residue chain is Phosphopantetheine adenylyltransferase (156 aa).

Thr9 provides a ligand contact to substrate. ATP-binding positions include 9-10 and His17; that span reads TF. Positions 41, 73, and 87 each coordinate substrate. ATP-binding positions include 88 to 90, Glu98, and 123 to 129; these read GVR and WVFVSST.

It belongs to the bacterial CoaD family. As to quaternary structure, homohexamer. Mg(2+) is required as a cofactor.

It localises to the cytoplasm. The catalysed reaction is (R)-4'-phosphopantetheine + ATP + H(+) = 3'-dephospho-CoA + diphosphate. The protein operates within cofactor biosynthesis; coenzyme A biosynthesis; CoA from (R)-pantothenate: step 4/5. Reversibly transfers an adenylyl group from ATP to 4'-phosphopantetheine, yielding dephospho-CoA (dPCoA) and pyrophosphate. This Haemophilus influenzae (strain PittEE) protein is Phosphopantetheine adenylyltransferase.